The chain runs to 270 residues: Formamidopyrimidine-DNA glycosylase (270 aa).

Proline 2 serves as the catalytic Schiff-base intermediate with DNA. The Proton donor role is filled by glutamate 3. The active-site Proton donor; for beta-elimination activity is lysine 58. The DNA site is built by histidine 91, arginine 109, and arginine 151. The segment at 236–270 (MVYNRQEEPCRLCGTPIRQIRQGQRSTYYCPLCQP) adopts an FPG-type zinc-finger fold. The Proton donor; for delta-elimination activity role is filled by arginine 260.

Belongs to the FPG family. In terms of assembly, monomer. Zn(2+) serves as cofactor.

The catalysed reaction is Hydrolysis of DNA containing ring-opened 7-methylguanine residues, releasing 2,6-diamino-4-hydroxy-5-(N-methyl)formamidopyrimidine.. It carries out the reaction 2'-deoxyribonucleotide-(2'-deoxyribose 5'-phosphate)-2'-deoxyribonucleotide-DNA = a 3'-end 2'-deoxyribonucleotide-(2,3-dehydro-2,3-deoxyribose 5'-phosphate)-DNA + a 5'-end 5'-phospho-2'-deoxyribonucleoside-DNA + H(+). Its function is as follows. Involved in base excision repair of DNA damaged by oxidation or by mutagenic agents. Acts as a DNA glycosylase that recognizes and removes damaged bases. Has a preference for oxidized purines, such as 7,8-dihydro-8-oxoguanine (8-oxoG). Has AP (apurinic/apyrimidinic) lyase activity and introduces nicks in the DNA strand. Cleaves the DNA backbone by beta-delta elimination to generate a single-strand break at the site of the removed base with both 3'- and 5'-phosphates. This is Formamidopyrimidine-DNA glycosylase from Chromobacterium violaceum (strain ATCC 12472 / DSM 30191 / JCM 1249 / CCUG 213 / NBRC 12614 / NCIMB 9131 / NCTC 9757 / MK).